A 70-amino-acid chain; its full sequence is Neuropeptide SIFamide (70 aa).

The N-terminal stretch at 1–22 (MRFIVALCLFAIVMCIIHKAEG) is a signal peptide. Position 34 is a phenylalanine amide (Phe34). A propeptide spanning residues 38–70 (GVVEYDTTGRALSALCEIASETCQAWYQTLENK) is cleaved from the precursor.

Expressed in antennal lobe (AL) and gnathal ganglion (GNG) with expression detected in most animals (at protein level). Not expressed in corpora cardiaca (CC) and corpora allata (CA) (at protein level).

The protein localises to the secreted. In terms of biological role, ligand for the neuropeptide SIFamide receptor. The protein is Neuropeptide SIFamide of Agrotis ipsilon (Black cutworm moth).